Here is a 132-residue protein sequence, read N- to C-terminus: Large ribosomal subunit protein uL14 (132 aa).

Belongs to the universal ribosomal protein uL14 family. As to quaternary structure, part of the 50S ribosomal subunit. Forms a cluster with proteins L3 and L24e, part of which may contact the 16S rRNA in 2 intersubunit bridges.

Functionally, binds to 23S rRNA. Forms part of two intersubunit bridges in the 70S ribosome. This is Large ribosomal subunit protein uL14 from Methanococcus maripaludis (strain DSM 14266 / JCM 13030 / NBRC 101832 / S2 / LL).